Consider the following 474-residue polypeptide: Trehalose-6-phosphate synthase (474 aa).

Position 10 (Arg-10) interacts with D-glucose 6-phosphate. 22–23 (GG) lines the UDP-alpha-D-glucose pocket. Tyr-77 and Asp-131 together coordinate D-glucose 6-phosphate. The UDP-alpha-D-glucose site is built by Arg-263 and Lys-268. Arg-301 is a D-glucose 6-phosphate binding site. UDP-alpha-D-glucose is bound by residues Phe-340 and 366–370 (LVAKE).

The protein belongs to the glycosyltransferase 20 family. As to quaternary structure, homotetramer.

It carries out the reaction D-glucose 6-phosphate + UDP-alpha-D-glucose = alpha,alpha-trehalose 6-phosphate + UDP + H(+). It functions in the pathway glycan biosynthesis; trehalose biosynthesis. In terms of biological role, probably involved in the osmoprotection via the biosynthesis of trehalose. Catalyzes the transfer of glucose from UDP-alpha-D-glucose (UDP-Glc) to D-glucose 6-phosphate (Glc-6-P) to form trehalose-6-phosphate. Acts with retention of the anomeric configuration of the UDP-sugar donor. The protein is Trehalose-6-phosphate synthase of Escherichia coli O9:H4 (strain HS).